A 402-amino-acid chain; its full sequence is Sorting nexin 1 (402 aa).

The span at 1–10 shows a compositional bias: polar residues; the sequence is MESTEQPRNI. A disordered region spans residues 1–25; the sequence is MESTEQPRNISGSMQSPRSPSSHPY. The span at 11–24 shows a compositional bias: low complexity; that stretch reads SGSMQSPRSPSSHP. At S16 the chain carries Phosphoserine. The PX domain occupies 24-143; sequence PYLSVSVTDP…TFLQADEETM (120 aa). Residues R67, K93, and R109 each coordinate a 1,2-diacyl-sn-glycero-3-phospho-(1D-myo-inositol-3-phosphate). One can recognise a BAR domain in the interval 160 to 402; sequence LMQMFRDVQS…LPKLEASYSV (243 aa).

The protein belongs to the sorting nexin family. In terms of assembly, homodimer. Heterodimer with SNX2A or SNX2B. Component of the retromer complex which consists of VPS29 (MAG1), VPS26 (VPS26A or VPS26B), VPS35 (VPS35A or VPS35B or VPS35C), VPS5/17 (SNX1 or SNX2A or SNX2B). Interacts with BLOS1 and BLOS2. As to expression, ubiquitously expressed.

It is found in the cytoplasm. The protein resides in the endosome membrane. It localises to the prevacuolar compartment membrane. The protein localises to the golgi apparatus. Its subcellular location is the trans-Golgi network membrane. Its function is as follows. Plays a role in vesicular protein sorting. Acts at the crossroads between the secretory and endocytic pathways. Is involved in the endosome to vacuole protein transport via its interaction with the BLOS1/2 proteins and, as component of the membrane-associated retromer complex, is also involved in endosome-to-Golgi retrograde transport. Required for the auxin-carrier protein PIN2 sorting to the lytic vacuolar pathway and the trafficking of several plasma membrane proteins. Also involved in the efficient sorting of seed storage protein globulin 12S. This Arabidopsis thaliana (Mouse-ear cress) protein is Sorting nexin 1 (SNX1).